Reading from the N-terminus, the 1322-residue chain is C-Jun-amino-terminal kinase-interacting protein 3 (1322 aa).

The 89-residue stretch at 12 to 100 folds into the RH1 domain; it reads VVVYQDDYCS…LTQYEREKAL (89 aa). The segment at 50-80 is kinesin-binding domain (KBD); essential for its function in axon elongation; sequence EVVKELMPLVVNVLENLDSVLSENQEHEVEL. Residues 66–167 are a coiled coil; it reads LDSVLSENQE…KKEYNALHQR (102 aa). Disordered stretches follow at residues 183–211 and 245–317; these read KMQQ…SLNV and SSSY…NSRN. A JNK-binding domain (JBD); essential for its function in axon elongation region spans residues 210 to 226; that stretch reads NVFPLADGMVRAQMGGK. Positions 261–270 are enriched in low complexity; that stretch reads SSAAATPSTT. Threonine 266, threonine 276, and threonine 287 each carry phosphothreonine. Over residues 271–282 the composition is skewed to polar residues; the sequence is GTKSNTPTSSVP. The span at 305–315 shows a compositional bias: basic residues; that stretch reads NNKRAREKRNS. Phosphoserine is present on residues serine 315, serine 365, and serine 366. Residues 424 to 459 are leucine zipper-like domain (LZ); essential for its function in axon elongation; the sequence is QLLETKNALNVVKNDLIAKVDQLSGEQEVLKGELEA. A coiled-coil region spans residues 443–534; it reads VDQLSGEQEV…KERLMELQEA (92 aa). Residues 459–515 form an interaction with NTRK2 region; that stretch reads AAKQAKVKLENRIKELEEELKRVKSEAVTARREPREEVEDDKIPMAQRRRFTRVEMA. Residues 506–580 enclose the RH2 domain; that stretch reads RRRFTRVEMA…SPPPAKRSYP (75 aa). A phosphoserine mark is found at serine 588 and serine 662. Disordered stretches follow at residues 704–754, 844–952, and 1281–1307; these read WKPN…EADA, PRSN…TTSS, and RIGD…LSKA. Residues 724–750 are compositionally biased toward basic and acidic residues; the sequence is LTCDREGEGEPKSTHPSPEKKKAKEVP. Residues 914–937 show a composition bias toward polar residues; the sequence is APTQSSSTQPASENGSESDGSIVQ. Over residues 941 to 952 the composition is skewed to low complexity; it reads EPSGESSATTSS. Positions 1285–1294 are enriched in acidic residues; the sequence is GEDDETEEGT.

This sequence belongs to the JIP scaffold family. Forms homo- or heterooligomeric complexes. The central region of MAPK8IP3 interacts with the C-terminal of MAPK8IP2 but not MAPK8IP1. Binds specific components of the JNK signaling pathway namely MAPK8/JNK1, MAPK9/JNK2 and MAPK10/JNK3 to the N-terminal region, MAP2K4/MKK4 and MAP2K7/MKK7 to the central region and MAP3K11 to the C-terminal region. Binds the TPR motif-containing C-terminal of kinesin light chain, KLC1. Pre-assembled MAPK8IP1 scaffolding complexes are then transported as a cargo of kinesin, to the required subcellular location. Interacts with ROCK1 and this interaction is enhanced by ultraviolet-B (UVB) radiation. Interacts with SH3RF2. Interacts with NTRK3/TRKC. Interacts with NTRK2/TRKB. In terms of processing, phosphorylation by ROCK1 is crucial for the recruitment of JNK.

The protein resides in the cytoplasm. It localises to the golgi apparatus. Its subcellular location is the cytoplasmic vesicle. It is found in the cell projection. The protein localises to the growth cone. The protein resides in the axon. It localises to the dendrite. Its subcellular location is the perinuclear region. In terms of biological role, the JNK-interacting protein (JIP) group of scaffold proteins selectively mediates JNK signaling by aggregating specific components of the MAPK cascade to form a functional JNK signaling module. May function as a regulator of vesicle transport, through interactions with the JNK-signaling components and motor proteins. Promotes neuronal axon elongation in a kinesin- and JNK-dependent manner. Activates cofilin at axon tips via local activation of JNK, thereby regulating filopodial dynamics and enhancing axon elongation. Its binding to kinesin heavy chains (KHC), promotes kinesin-1 motility along microtubules and is essential for axon elongation and regeneration. Regulates cortical neuronal migration by mediating NTRK2/TRKB anterograde axonal transport during brain development. Acts as an adapter that bridges the interaction between NTRK2/TRKB and KLC1 and drives NTRK2/TRKB axonal but not dendritic anterograde transport, which is essential for subsequent BDNF-triggered signaling and filopodia formation. The sequence is that of C-Jun-amino-terminal kinase-interacting protein 3 (Mapk8ip3) from Rattus norvegicus (Rat).